The chain runs to 790 residues: Penicillin-binding protein 1A (790 aa).

Residues 1–6 (MYKSLL) lie on the Cytoplasmic side of the membrane. A helical; Signal-anchor for type II membrane protein membrane pass occupies residues 7 to 27 (FCLKIFVFLILVGCGITAYII). Residues 28–790 (YHYSRDLPDY…SKEDQSQEIY (763 aa)) lie on the Periplasmic side of the membrane. A transglycosylase region spans residues 49–220 (TRIYSRDGKL…SELNPERNYA (172 aa)). The Proton donor; for transglycosylase activity role is filled by E87. The tract at residues 398-711 (DVIVVEAIKE…SNVVLPIFID (314 aa)) is transpeptidase. S457 acts as the Acyl-ester intermediate; for transpeptidase activity in catalysis.

In the N-terminal section; belongs to the glycosyltransferase 51 family. The protein in the C-terminal section; belongs to the transpeptidase family.

Its subcellular location is the cell inner membrane. The catalysed reaction is [GlcNAc-(1-&gt;4)-Mur2Ac(oyl-L-Ala-gamma-D-Glu-L-Lys-D-Ala-D-Ala)](n)-di-trans,octa-cis-undecaprenyl diphosphate + beta-D-GlcNAc-(1-&gt;4)-Mur2Ac(oyl-L-Ala-gamma-D-Glu-L-Lys-D-Ala-D-Ala)-di-trans,octa-cis-undecaprenyl diphosphate = [GlcNAc-(1-&gt;4)-Mur2Ac(oyl-L-Ala-gamma-D-Glu-L-Lys-D-Ala-D-Ala)](n+1)-di-trans,octa-cis-undecaprenyl diphosphate + di-trans,octa-cis-undecaprenyl diphosphate + H(+). It carries out the reaction Preferential cleavage: (Ac)2-L-Lys-D-Ala-|-D-Ala. Also transpeptidation of peptidyl-alanyl moieties that are N-acyl substituents of D-alanine.. It functions in the pathway cell wall biogenesis; peptidoglycan biosynthesis. Functionally, cell wall formation. Synthesis of cross-linked peptidoglycan from the lipid intermediates. The enzyme has a penicillin-insensitive transglycosylase N-terminal domain (formation of linear glycan strands) and a penicillin-sensitive transpeptidase C-terminal domain (cross-linking of the peptide subunits). The chain is Penicillin-binding protein 1A (mrcA) from Rickettsia conorii (strain ATCC VR-613 / Malish 7).